The primary structure comprises 338 residues: 1-aminocyclopropane-1-carboxylate deaminase (338 aa).

Lys-51 bears the N6-(pyridoxal phosphate)lysine mark. Ser-78 serves as the catalytic Nucleophile.

The protein belongs to the ACC deaminase/D-cysteine desulfhydrase family. In terms of assembly, homotrimer. Pyridoxal 5'-phosphate serves as cofactor.

It catalyses the reaction 1-aminocyclopropane-1-carboxylate + H2O = 2-oxobutanoate + NH4(+). Its function is as follows. Catalyzes a cyclopropane ring-opening reaction, the irreversible conversion of 1-aminocyclopropane-1-carboxylate (ACC) to ammonia and alpha-ketobutyrate. Allows growth on ACC as a nitrogen source. The sequence is that of 1-aminocyclopropane-1-carboxylate deaminase from Paracidovorax citrulli (strain AAC00-1) (Acidovorax citrulli).